The sequence spans 364 residues: Peptide chain release factor 1 (364 aa).

Position 237 is an N5-methylglutamine (Q237).

It belongs to the prokaryotic/mitochondrial release factor family. Post-translationally, methylated by PrmC. Methylation increases the termination efficiency of RF1.

Its subcellular location is the cytoplasm. Its function is as follows. Peptide chain release factor 1 directs the termination of translation in response to the peptide chain termination codons UAG and UAA. The sequence is that of Peptide chain release factor 1 from Mycoplasma mycoides subsp. mycoides SC (strain CCUG 32753 / NCTC 10114 / PG1).